Reading from the N-terminus, the 371-residue chain is Forkhead box protein E1 (371 aa).

Positions 21-53 (EERGEAAAAGAGVPAEAAGRGAGGRRRKRPLQR) are disordered. Positions 26 to 39 (AAAAGAGVPAEAAG) are enriched in low complexity. The segment covering 43 to 52 (GGRRRKRPLQ) has biased composition (basic residues). Residues 55 to 149 (KPPYSYIALI…ESGSFLRRRK (95 aa)) constitute a DNA-binding region (fork-head).

In terms of processing, phosphorylated. As to expression, expressed in Rathke pouch, in thyroid, and in the epithelium of the pharyngeal wall and arches, whereas it is absent in the epithelium of the pharyngeal pouches.

The protein localises to the nucleus. Functionally, transcription factor that binds consensus sites on a variety of gene promoters and activate their transcription. Involved in proper palate formation, most probably through the expression of MSX1 and TGFB3 genes which are direct targets of this transcription factor. Also implicated in thyroid gland morphogenesis. May indirectly play a role in cell growth and migration through the regulation of WNT5A expression. This Mus musculus (Mouse) protein is Forkhead box protein E1 (Foxe1).